Consider the following 51-residue polypeptide: Large ribosomal subunit protein eL39 (51 aa).

The protein belongs to the eukaryotic ribosomal protein eL39 family.

In Staphylothermus marinus (strain ATCC 43588 / DSM 3639 / JCM 9404 / F1), this protein is Large ribosomal subunit protein eL39.